We begin with the raw amino-acid sequence, 264 residues long: Thymidylate synthase (264 aa).

Position 21 (R21) interacts with dUMP. A (6R)-5,10-methylene-5,6,7,8-tetrahydrofolate-binding site is contributed by H51. 126-127 (RR) serves as a coordination point for dUMP. The active-site Nucleophile is C146. Residues 166–169 (RSAD), N177, and 207–209 (HIY) contribute to the dUMP site. Residue D169 coordinates (6R)-5,10-methylene-5,6,7,8-tetrahydrofolate. A263 serves as a coordination point for (6R)-5,10-methylene-5,6,7,8-tetrahydrofolate.

The protein belongs to the thymidylate synthase family. Bacterial-type ThyA subfamily. Homodimer.

It localises to the cytoplasm. The catalysed reaction is dUMP + (6R)-5,10-methylene-5,6,7,8-tetrahydrofolate = 7,8-dihydrofolate + dTMP. Its pathway is pyrimidine metabolism; dTTP biosynthesis. In terms of biological role, catalyzes the reductive methylation of 2'-deoxyuridine-5'-monophosphate (dUMP) to 2'-deoxythymidine-5'-monophosphate (dTMP) while utilizing 5,10-methylenetetrahydrofolate (mTHF) as the methyl donor and reductant in the reaction, yielding dihydrofolate (DHF) as a by-product. This enzymatic reaction provides an intracellular de novo source of dTMP, an essential precursor for DNA biosynthesis. In Ruthia magnifica subsp. Calyptogena magnifica, this protein is Thymidylate synthase.